The primary structure comprises 341 residues: Anthranilate phosphoribosyltransferase (341 aa).

5-phospho-alpha-D-ribose 1-diphosphate is bound by residues Gly81, 84-85 (GD), 91-94 (NVST), 109-117 (KHGNRSVSS), and Ser121. An anthranilate-binding site is contributed by Gly81. Position 93 (Ser93) interacts with Mg(2+). Asn112 serves as a coordination point for anthranilate. Arg167 serves as a coordination point for anthranilate. The Mg(2+) site is built by Asp226 and Glu227.

The protein belongs to the anthranilate phosphoribosyltransferase family. Homodimer. Mg(2+) is required as a cofactor.

It catalyses the reaction N-(5-phospho-beta-D-ribosyl)anthranilate + diphosphate = 5-phospho-alpha-D-ribose 1-diphosphate + anthranilate. The protein operates within amino-acid biosynthesis; L-tryptophan biosynthesis; L-tryptophan from chorismate: step 2/5. Catalyzes the transfer of the phosphoribosyl group of 5-phosphorylribose-1-pyrophosphate (PRPP) to anthranilate to yield N-(5'-phosphoribosyl)-anthranilate (PRA). The chain is Anthranilate phosphoribosyltransferase from Saccharophagus degradans (strain 2-40 / ATCC 43961 / DSM 17024).